The chain runs to 695 residues: Elongation factor G (695 aa).

Residues glutamate 8–threonine 282 enclose the tr-type G domain. Residues alanine 17–threonine 24, aspartate 81–histidine 85, and asparagine 135–aspartate 138 contribute to the GTP site.

The protein belongs to the TRAFAC class translation factor GTPase superfamily. Classic translation factor GTPase family. EF-G/EF-2 subfamily.

It is found in the cytoplasm. Catalyzes the GTP-dependent ribosomal translocation step during translation elongation. During this step, the ribosome changes from the pre-translocational (PRE) to the post-translocational (POST) state as the newly formed A-site-bound peptidyl-tRNA and P-site-bound deacylated tRNA move to the P and E sites, respectively. Catalyzes the coordinated movement of the two tRNA molecules, the mRNA and conformational changes in the ribosome. This Listeria innocua serovar 6a (strain ATCC BAA-680 / CLIP 11262) protein is Elongation factor G.